Reading from the N-terminus, the 475-residue chain is Ribulose bisphosphate carboxylase large chain (475 aa).

The propeptide occupies 1–2 (MS). Pro3 bears the N-acetylproline mark. At Lys14 the chain carries N6,N6,N6-trimethyllysine. Substrate contacts are provided by Asn123 and Thr173. Residue Lys175 is the Proton acceptor of the active site. Lys177 contacts substrate. Mg(2+)-binding residues include Lys201, Asp203, and Glu204. Lys201 is modified (N6-carboxylysine). The Proton acceptor role is filled by His294. Substrate-binding residues include Arg295, His327, and Ser379.

Belongs to the RuBisCO large chain family. Type I subfamily. In terms of assembly, heterohexadecamer of 8 large chains and 8 small chains; disulfide-linked. The disulfide link is formed within the large subunit homodimers. Mg(2+) is required as a cofactor. In terms of processing, the disulfide bond which can form in the large chain dimeric partners within the hexadecamer appears to be associated with oxidative stress and protein turnover.

The protein localises to the plastid. The protein resides in the chloroplast. The catalysed reaction is 2 (2R)-3-phosphoglycerate + 2 H(+) = D-ribulose 1,5-bisphosphate + CO2 + H2O. The enzyme catalyses D-ribulose 1,5-bisphosphate + O2 = 2-phosphoglycolate + (2R)-3-phosphoglycerate + 2 H(+). In terms of biological role, ruBisCO catalyzes two reactions: the carboxylation of D-ribulose 1,5-bisphosphate, the primary event in carbon dioxide fixation, as well as the oxidative fragmentation of the pentose substrate in the photorespiration process. Both reactions occur simultaneously and in competition at the same active site. The chain is Ribulose bisphosphate carboxylase large chain from Notothixos subaureus (Golden mistletoe).